The following is a 66-amino-acid chain: Large ribosomal subunit protein bL35 (66 aa).

Belongs to the bacterial ribosomal protein bL35 family.

The chain is Large ribosomal subunit protein bL35 from Caulobacter vibrioides (strain ATCC 19089 / CIP 103742 / CB 15) (Caulobacter crescentus).